Reading from the N-terminus, the 226-residue chain is Ribosomal RNA small subunit methyltransferase Nep1 (226 aa).

S-adenosyl-L-methionine is bound by residues Gly176, Gly181, and Ile197–Leu202.

It belongs to the class IV-like SAM-binding methyltransferase superfamily. RNA methyltransferase NEP1 family. Homodimer.

The catalysed reaction is a pseudouridine in rRNA + S-adenosyl-L-methionine = an N(1)-methylpseudouridine in rRNA + S-adenosyl-L-homocysteine + H(+). Its function is as follows. Methyltransferase involved in ribosomal biogenesis. Specifically catalyzes the N1-methylation of the pseudouridine corresponding to position 914 in M.jannaschii 16S rRNA. This is Ribosomal RNA small subunit methyltransferase Nep1 from Methanothrix thermoacetophila (strain DSM 6194 / JCM 14653 / NBRC 101360 / PT) (Methanosaeta thermophila).